Reading from the N-terminus, the 116-residue chain is G antigen 2A (116 aa).

The tract at residues 1–116 (MSWRGRSTYR…PEEGEKQSQC (116 aa)) is disordered. 2 stretches are compositionally biased toward acidic residues: residues 31–44 (FSDEVEPATPEEGE) and 86–95 (ECEDGPDGQE). Basic and acidic residues predominate over residues 102–116 (EEVKTPEEGEKQSQC).

The protein belongs to the GAGE family.

The protein is G antigen 2A (GAGE2A) of Homo sapiens (Human).